The chain runs to 130 residues: Putative antitoxin VapB50 (130 aa).

In terms of biological role, possibly the antitoxin component of a type II toxin-antitoxin (TA) system. Its cognate toxin is VapC50. The protein is Putative antitoxin VapB50 of Mycobacterium tuberculosis (strain ATCC 25618 / H37Rv).